The following is a 503-amino-acid chain: Cobyric acid synthase (503 aa).

The GATase cobBQ-type domain maps to 255–444 (DIDIAVIRYP…FHDLFHNDAF (190 aa)). C337 serves as the catalytic Nucleophile. The active site involves H436.

It belongs to the CobB/CobQ family. CobQ subfamily.

The protein operates within cofactor biosynthesis; adenosylcobalamin biosynthesis. Catalyzes amidations at positions B, D, E, and G on adenosylcobyrinic A,C-diamide. NH(2) groups are provided by glutamine, and one molecule of ATP is hydrogenolyzed for each amidation. This chain is Cobyric acid synthase, found in Geobacillus sp. (strain WCH70).